We begin with the raw amino-acid sequence, 568 residues long: Urease subunit alpha (568 aa).

In terms of domain architecture, Urease spans 130-568; the sequence is GGIDTHIHFI…LPMAQRYFLF (439 aa). Residues His135, His137, and Lys218 each contribute to the Ni(2+) site. At Lys218 the chain carries N6-carboxylysine. His220 serves as a coordination point for substrate. Ni(2+)-binding residues include His247 and His273. The active-site Proton donor is His321. Ni(2+) is bound at residue Asp361.

It belongs to the metallo-dependent hydrolases superfamily. Urease alpha subunit family. Heterotrimer of UreA (gamma), UreB (beta) and UreC (alpha) subunits. Three heterotrimers associate to form the active enzyme. The cofactor is Ni cation. In terms of processing, carboxylation allows a single lysine to coordinate two nickel ions.

The protein localises to the cytoplasm. The catalysed reaction is urea + 2 H2O + H(+) = hydrogencarbonate + 2 NH4(+). It functions in the pathway nitrogen metabolism; urea degradation; CO(2) and NH(3) from urea (urease route): step 1/1. This is Urease subunit alpha from Burkholderia cenocepacia (strain ATCC BAA-245 / DSM 16553 / LMG 16656 / NCTC 13227 / J2315 / CF5610) (Burkholderia cepacia (strain J2315)).